The primary structure comprises 377 residues: Early estrogen-induced gene 1 protein (377 aa).

One can recognise a C2 NT-type domain in the interval 2–145; that stretch reads AFLTKKKKFK…ILKVNIGMSL (144 aa). 3 stretches are compositionally biased toward polar residues: residues 160-173, 188-198, and 222-234; these read KTVSPPGQDSSLQM, VRQNRSRQAML, and SRNSSQASQQSKI. A disordered region spans residues 160-313; it reads KTVSPPGQDS…SVESQPTWVD (154 aa). The span at 256 to 269 shows a compositional bias: low complexity; that stretch reads TSTSSSVSGGLSLT. Positions 274-285 are enriched in basic and acidic residues; the sequence is EPERDVKPEKPP.

This sequence belongs to the EEIG family.

Its subcellular location is the nucleus. The protein resides in the cytoplasm. In terms of biological role, may be involved in osteoclast differentiation. The sequence is that of Early estrogen-induced gene 1 protein (eeig1) from Xenopus laevis (African clawed frog).